The following is a 396-amino-acid chain: Deoxyuridine 5'-triphosphate nucleotidohydrolase (396 aa).

Residues 280–282 (RSS) and 380–381 (FG) contribute to the substrate site.

It belongs to the dUTPase family. The cofactor is Mg(2+).

The catalysed reaction is dUTP + H2O = dUMP + diphosphate + H(+). Its function is as follows. Involved in nucleotide metabolism: produces dUMP, the immediate precursor of thymidine nucleotides and decreases the intracellular concentration of dUTP to avoid uracil incorporation into viral DNA. The chain is Deoxyuridine 5'-triphosphate nucleotidohydrolase from Varicella-zoster virus (strain Dumas) (HHV-3).